Reading from the N-terminus, the 368-residue chain is Histidinol-phosphate aminotransferase (368 aa).

Residue Lys-224 is modified to N6-(pyridoxal phosphate)lysine.

It belongs to the class-II pyridoxal-phosphate-dependent aminotransferase family. Histidinol-phosphate aminotransferase subfamily. In terms of assembly, homodimer. It depends on pyridoxal 5'-phosphate as a cofactor.

The enzyme catalyses L-histidinol phosphate + 2-oxoglutarate = 3-(imidazol-4-yl)-2-oxopropyl phosphate + L-glutamate. Its pathway is amino-acid biosynthesis; L-histidine biosynthesis; L-histidine from 5-phospho-alpha-D-ribose 1-diphosphate: step 7/9. This chain is Histidinol-phosphate aminotransferase, found in Agrobacterium fabrum (strain C58 / ATCC 33970) (Agrobacterium tumefaciens (strain C58)).